We begin with the raw amino-acid sequence, 610 residues long: UvrABC system protein C (610 aa).

The region spanning 16–94 (SQPGVYRMYD…IKLYQPRYNV (79 aa)) is the GIY-YIG domain. Residues 204 to 239 (DQVLTQLIARMEKASQDLAFEEAARIRDQIQAVRRV) enclose the UVR domain.

The protein belongs to the UvrC family. In terms of assembly, interacts with UvrB in an incision complex.

Its subcellular location is the cytoplasm. The UvrABC repair system catalyzes the recognition and processing of DNA lesions. UvrC both incises the 5' and 3' sides of the lesion. The N-terminal half is responsible for the 3' incision and the C-terminal half is responsible for the 5' incision. This chain is UvrABC system protein C, found in Salmonella paratyphi A (strain ATCC 9150 / SARB42).